Consider the following 328-residue polypeptide: Ribosomal RNA small subunit methyltransferase H (328 aa).

S-adenosyl-L-methionine is bound by residues 35–37, aspartate 60, phenylalanine 87, aspartate 113, and glutamine 120; that span reads GSH.

Belongs to the methyltransferase superfamily. RsmH family.

It is found in the cytoplasm. The catalysed reaction is cytidine(1402) in 16S rRNA + S-adenosyl-L-methionine = N(4)-methylcytidine(1402) in 16S rRNA + S-adenosyl-L-homocysteine + H(+). Its function is as follows. Specifically methylates the N4 position of cytidine in position 1402 (C1402) of 16S rRNA. The polypeptide is Ribosomal RNA small subunit methyltransferase H (Chlorobium chlorochromatii (strain CaD3)).